The chain runs to 81 residues: Short neurotoxin SN160 (81 aa).

A signal peptide spans 1-21 (MKTLLLTLVVVTIVCLDLGYT). Intrachain disulfides connect Cys-24–Cys-43, Cys-38–Cys-60, Cys-62–Cys-73, and Cys-74–Cys-79.

It belongs to the three-finger toxin family. Short-chain subfamily. Type I alpha-neurotoxin sub-subfamily. Expressed by the venom gland.

It is found in the secreted. In terms of biological role, binds to muscle nicotinic acetylcholine receptor (nAChR) and inhibit acetylcholine from binding to the receptor, thereby impairing neuromuscular transmission. The chain is Short neurotoxin SN160 from Hydrophis hardwickii (Hardwick's spine-bellied seasnake).